Reading from the N-terminus, the 228-residue chain is Phosphoribosylformylglycinamidine synthase subunit PurQ (228 aa).

The 224-residue stretch at K2–R225 folds into the Glutamine amidotransferase type-1 domain. The active-site Nucleophile is C86. Catalysis depends on residues H194 and E196.

As to quaternary structure, part of the FGAM synthase complex composed of 1 PurL, 1 PurQ and 2 PurS subunits.

It is found in the cytoplasm. It carries out the reaction N(2)-formyl-N(1)-(5-phospho-beta-D-ribosyl)glycinamide + L-glutamine + ATP + H2O = 2-formamido-N(1)-(5-O-phospho-beta-D-ribosyl)acetamidine + L-glutamate + ADP + phosphate + H(+). The catalysed reaction is L-glutamine + H2O = L-glutamate + NH4(+). It participates in purine metabolism; IMP biosynthesis via de novo pathway; 5-amino-1-(5-phospho-D-ribosyl)imidazole from N(2)-formyl-N(1)-(5-phospho-D-ribosyl)glycinamide: step 1/2. Part of the phosphoribosylformylglycinamidine synthase complex involved in the purines biosynthetic pathway. Catalyzes the ATP-dependent conversion of formylglycinamide ribonucleotide (FGAR) and glutamine to yield formylglycinamidine ribonucleotide (FGAM) and glutamate. The FGAM synthase complex is composed of three subunits. PurQ produces an ammonia molecule by converting glutamine to glutamate. PurL transfers the ammonia molecule to FGAR to form FGAM in an ATP-dependent manner. PurS interacts with PurQ and PurL and is thought to assist in the transfer of the ammonia molecule from PurQ to PurL. The polypeptide is Phosphoribosylformylglycinamidine synthase subunit PurQ (Lacticaseibacillus paracasei (strain ATCC 334 / BCRC 17002 / CCUG 31169 / CIP 107868 / KCTC 3260 / NRRL B-441) (Lactobacillus paracasei)).